The chain runs to 524 residues: Nickel-binding periplasmic protein (524 aa).

The signal sequence occupies residues 1–22 (MLSTLRRTLFALLACASFIVHA).

Belongs to the bacterial solute-binding protein 5 family.

The protein localises to the periplasm. Involved in a nickel transport system, probably represents the nickel binder. The chain is Nickel-binding periplasmic protein (nikA) from Escherichia coli (strain K12).